The following is a 359-amino-acid chain: Putative nucleotidyltransferase MAB21L1 (359 aa).

A ribonucleoside 5'-triphosphate-binding positions include 23-24 and 63-66; these read RK and YEGL. Mg(2+) contacts are provided by E73 and E75. A ribonucleoside 5'-triphosphate-binding positions include K248 and 252 to 255; that span reads SLLK.

This sequence belongs to the mab-21 family. In terms of assembly, monomer. Homodecamer; composed of 2 back to back homopentamers. The protein may exist as monomer in solution and oiligomerizes upon ligand binding.

Its subcellular location is the nucleus. Putative nucleotidyltransferase required for several aspects of embryonic development including normal development of the eye. It is unclear whether it displays nucleotidyltransferase activity in vivo. Binds single-stranded RNA (ssRNA). This chain is Putative nucleotidyltransferase MAB21L1 (mab21l1), found in Xenopus laevis (African clawed frog).